The following is a 109-amino-acid chain: Large ribosomal subunit protein uL24 (109 aa).

This sequence belongs to the universal ribosomal protein uL24 family. In terms of assembly, part of the 50S ribosomal subunit.

Its function is as follows. One of two assembly initiator proteins, it binds directly to the 5'-end of the 23S rRNA, where it nucleates assembly of the 50S subunit. One of the proteins that surrounds the polypeptide exit tunnel on the outside of the subunit. The sequence is that of Large ribosomal subunit protein uL24 from Rickettsia akari (strain Hartford).